We begin with the raw amino-acid sequence, 569 residues long: Membrane protein insertase YidC (569 aa).

Helical transmembrane passes span 7–24 (VLWVIFSFSLLMLWDNYN), 219–239 (GSALGGGSMFMASAFTGPAIY), 299–319 (LYAVGTILPMGTVAPGATASM), 340–360 (FELVKDYGWLTIIAKPIFWLM), 366–386 (ILGNWGWTIIVLTIVIKLAFF), 436–456 (IGGCFPMLVQIPVFISLYWVL), 485–505 (IGTFHLTIGILPILMAISMFI), and 526–546 (PIAFSVMFFFFPAGLVLYWVV).

This sequence belongs to the OXA1/ALB3/YidC family. Type 1 subfamily. In terms of assembly, interacts with the Sec translocase complex via SecD. Specifically interacts with transmembrane segments of nascent integral membrane proteins during membrane integration.

Its subcellular location is the cell inner membrane. Its function is as follows. Required for the insertion and/or proper folding and/or complex formation of integral membrane proteins into the membrane. Involved in integration of membrane proteins that insert both dependently and independently of the Sec translocase complex, as well as at least some lipoproteins. Aids folding of multispanning membrane proteins. The protein is Membrane protein insertase YidC of Herminiimonas arsenicoxydans.